Consider the following 142-residue polypeptide: HTH-type transcriptional regulator MntR (142 aa).

An HTH dtxR-type domain is found at 1–63 (MPTPSMEDYI…YEKYRGLVLT (63 aa)). 6 residues coordinate Mn(2+): aspartate 8, glutamate 11, histidine 77, glutamate 99, glutamate 102, and histidine 103.

The protein belongs to the DtxR/MntR family. In terms of assembly, homodimer.

It localises to the cytoplasm. With respect to regulation, DNA binding is strongly activated by Mn(2+). Functionally, central regulator of manganese homeostasis. The chain is HTH-type transcriptional regulator MntR from Bacillus cereus (strain B4264).